The following is a 162-amino-acid chain: UPF0262 protein HNE_1347 (162 aa).

This sequence belongs to the UPF0262 family.

In Hyphomonas neptunium (strain ATCC 15444), this protein is UPF0262 protein HNE_1347.